The primary structure comprises 477 residues: Putative WAS protein family homolog 4 (477 aa).

A WHD1 region spans residues 1–180 (MSGVMCLKAS…EGLGGLPSNI (180 aa)). Disordered stretches follow at residues 310 to 420 (QDGV…QGGH) and 434 to 477 (KGIS…DWES). The span at 315-327 (TPPPPPPPPPPAP) shows a compositional bias: pro residues. The interval 362–477 (QGAPREVVDP…QAEDEDDWES (116 aa)) is VCA. The 23-residue stretch at 374–396 (GWATLLESIRQAGGIGKAKLRSM) folds into the WH2 domain. Positions 395–411 (SMKERKLEKQQQKEQEQ) are enriched in basic and acidic residues. The span at 437–449 (SGKGPGAGDGPGG) shows a compositional bias: gly residues.

Belongs to the WASH1 family. In terms of assembly, interacts (via WHD1 region) with WASHC2C; the interaction is direct.

It localises to the early endosome membrane. The protein resides in the recycling endosome membrane. Its function is as follows. May act as a nucleation-promoting factor at the surface of endosomes, where it recruits and activates the Arp2/3 complex to induce actin polymerization, playing a key role in the fission of tubules that serve as transport intermediates during endosome sorting. The sequence is that of Putative WAS protein family homolog 4 (WASH4P) from Homo sapiens (Human).